The chain runs to 179 residues: Bifunctional protein PyrR (179 aa).

A PRPP-binding motif is present at residues valine 100 to threonine 112.

This sequence belongs to the purine/pyrimidine phosphoribosyltransferase family. PyrR subfamily. As to quaternary structure, homodimer and homohexamer; in equilibrium.

The enzyme catalyses UMP + diphosphate = 5-phospho-alpha-D-ribose 1-diphosphate + uracil. Functionally, regulates transcriptional attenuation of the pyrimidine nucleotide (pyr) operon by binding in a uridine-dependent manner to specific sites on pyr mRNA. This disrupts an antiterminator hairpin in the RNA and favors formation of a downstream transcription terminator, leading to a reduced expression of downstream genes. Its function is as follows. Also displays a weak uracil phosphoribosyltransferase activity which is not physiologically significant. The chain is Bifunctional protein PyrR from Geobacillus thermodenitrificans (strain NG80-2).